Here is a 475-residue protein sequence, read N- to C-terminus: Glutamyl-tRNA(Gln) amidotransferase subunit A (475 aa).

Catalysis depends on charge relay system residues K69 and S144. Residue S168 is the Acyl-ester intermediate of the active site.

Belongs to the amidase family. GatA subfamily. Heterotrimer of A, B and C subunits.

It carries out the reaction L-glutamyl-tRNA(Gln) + L-glutamine + ATP + H2O = L-glutaminyl-tRNA(Gln) + L-glutamate + ADP + phosphate + H(+). Functionally, allows the formation of correctly charged Gln-tRNA(Gln) through the transamidation of misacylated Glu-tRNA(Gln) in organisms which lack glutaminyl-tRNA synthetase. The reaction takes place in the presence of glutamine and ATP through an activated gamma-phospho-Glu-tRNA(Gln). This Methanosarcina barkeri (strain Fusaro / DSM 804) protein is Glutamyl-tRNA(Gln) amidotransferase subunit A.